The sequence spans 390 residues: uncharacterized protein (390 aa).

The next 11 membrane-spanning stretches (helical) occupy residues 7–27 (IYILAIVSFLVGTSEYIISGI), 35–55 (LGITLAAAGQLITIFSLVYAL), 77–97 (LGLFVFGNVLAFVLPGYGWFI), 101–121 (IIMAMGAGVVVVTALTIAAKI), 128–148 (GSAIATVVMGFTASLIIGVPL), 161–181 (VFGAIALLGLIAMVVIFFTLP), 203–223 (VAMGLSITFFWLGGYSVAYTY), 238–258 (LLSGVLLIFGIASLVGSKFGG), 281–301 (LILLSLVTHSYIGVLVILILW), 335–355 (MQFAMAVGAGIGGVFVENVSL), and 357–377 (SITWVGALGVMIAIIASLLIF).

Belongs to the major facilitator superfamily.

The protein localises to the cell membrane. This is an uncharacterized protein from Bacillus subtilis (strain 168).